A 510-amino-acid polypeptide reads, in one-letter code: NAD(P)H-quinone oxidoreductase subunit 2 A, chloroplastic (510 aa).

13 consecutive transmembrane segments (helical) span residues 24-44 (LLLF…GLIL), 57-77 (IPWL…ALLF), 99-119 (IFQF…VEYI), 124-144 (MAIT…MFLC), 149-169 (LITI…LSGY), 183-203 (YLLM…WLYG), 227-247 (PGIS…LSPA), 295-315 (WHLL…LIAI), 323-343 (MLAY…IVGD), 354-374 (YMLF…LFGL), 395-415 (ALSL…AGFF), 418-438 (LYLF…IGLL), and 484-504 (MIVC…IIAI).

The protein belongs to the complex I subunit 2 family. As to quaternary structure, NDH is composed of at least 16 different subunits, 5 of which are encoded in the nucleus.

It is found in the plastid. The protein localises to the chloroplast thylakoid membrane. The catalysed reaction is a plastoquinone + NADH + (n+1) H(+)(in) = a plastoquinol + NAD(+) + n H(+)(out). It carries out the reaction a plastoquinone + NADPH + (n+1) H(+)(in) = a plastoquinol + NADP(+) + n H(+)(out). Its function is as follows. NDH shuttles electrons from NAD(P)H:plastoquinone, via FMN and iron-sulfur (Fe-S) centers, to quinones in the photosynthetic chain and possibly in a chloroplast respiratory chain. The immediate electron acceptor for the enzyme in this species is believed to be plastoquinone. Couples the redox reaction to proton translocation, and thus conserves the redox energy in a proton gradient. In Panax ginseng (Korean ginseng), this protein is NAD(P)H-quinone oxidoreductase subunit 2 A, chloroplastic.